Reading from the N-terminus, the 479-residue chain is Glutamate receptor U1 (479 aa).

Positions 1–17 (MEKSLLFLFAVTLLSVG) are cleaved as a signal peptide. The Extracellular portion of the chain corresponds to 18–163 (CTDAGESKGS…LFGFLTPFSK (146 aa)). Residue Asn-79 is glycosylated (N-linked (GlcNAc...) asparagine). Residues 164–184 (ETWIGILVAYMVTSLCLFLVG) form a helical membrane-spanning segment. Residues 185-229 (RLSPCEWTELSTEQNNFTFLNSLWFGAGAFTLQGAEPHPKSVSAR) lie on the Cytoplasmic side of the membrane. The helical transmembrane segment at 230-250 (IIAVIWWIFSIVLVAAYIASF) threads the bilayer. At 251 to 414 (AAFLNSDSVQ…AGWNPVQPHT (164 aa)) the chain is on the extracellular side. A glycan (N-linked (GlcNAc...) asparagine) is linked at Asn-282. The helical transmembrane segment at 415–435 (LGGIFLILGIGLALGVIAALI) threads the bilayer. At 436 to 479 (ELVLKARNNADQQKKSCCSAFSEEMGERLGTNKENQGAVDSVKS) the chain is on the cytoplasmic side.

The protein belongs to the glutamate-gated ion channel (TC 1.A.10.1) family. In terms of assembly, homomeric.

Its subcellular location is the cell membrane. The protein localises to the postsynaptic cell membrane. Functionally, receptor for glutamate. L-glutamate acts as an excitatory neurotransmitter at many synapses in the central nervous system. The postsynaptic actions of Glu are mediated by a variety of receptors that are named according to their selective agonists. This receptor binds domoate &gt; kainate &gt; AMPA &gt; NBQX &gt; glutamate. This Xenopus laevis (African clawed frog) protein is Glutamate receptor U1 (kbp).